A 93-amino-acid chain; its full sequence is Integration host factor subunit beta (93 aa).

Belongs to the bacterial histone-like protein family. As to quaternary structure, heterodimer of an alpha and a beta chain.

Functionally, this protein is one of the two subunits of integration host factor, a specific DNA-binding protein that functions in genetic recombination as well as in transcriptional and translational control. This Actinobacillus pleuropneumoniae serotype 7 (strain AP76) protein is Integration host factor subunit beta.